A 306-amino-acid chain; its full sequence is UDP-N-acetylenolpyruvoylglucosamine reductase (306 aa).

The FAD-binding PCMH-type domain maps to 34 to 198; it reads VGGPADLLIT…LEVTFKLHNS (165 aa). Arginine 177 is an active-site residue. Serine 227 (proton donor) is an active-site residue. Glutamate 297 is an active-site residue.

It belongs to the MurB family. Requires FAD as cofactor.

The protein localises to the cytoplasm. It carries out the reaction UDP-N-acetyl-alpha-D-muramate + NADP(+) = UDP-N-acetyl-3-O-(1-carboxyvinyl)-alpha-D-glucosamine + NADPH + H(+). The protein operates within cell wall biogenesis; peptidoglycan biosynthesis. Cell wall formation. This Clostridium botulinum (strain Langeland / NCTC 10281 / Type F) protein is UDP-N-acetylenolpyruvoylglucosamine reductase.